The chain runs to 463 residues: Stress-activated protein kinase jnk-1 (463 aa).

A compositionally biased stretch (polar residues) spans 1–12 (MEERLSTTSSYP). The disordered stretch occupies residues 1–23 (MEERLSTTSSYPSHPGRSVEEDH). Positions 119 to 412 (YQNLRLIGSG…ISVDDALRHP (294 aa)) constitute a Protein kinase domain. ATP is bound by residues 126 to 131 (GSGAQG) and Lys-148. The active-site Proton acceptor is the Asp-244. Phosphothreonine is present on Thr-276. A TXY motif is present at residues 276 to 278 (TPY). Tyr-278 carries the post-translational modification Phosphotyrosine.

The protein belongs to the protein kinase superfamily. CMGC Ser/Thr protein kinase family. MAP kinase subfamily. Binds to the scaffolding protein, unc-16. Unc-16 also binds other components of the JNK signaling pathway. Interacts with daf-16. Mg(2+) is required as a cofactor. Dually phosphorylated on Thr-276 and Tyr-278, which activates the enzyme. Expressed in most neurons, including nerve ring, head ganglions, dorsal and ventral nerve cords and tail ganglions. The Thr-276/Tyr-278 phosphorylated form is present in the nerve ring upon heat exposure.

It localises to the cytoplasm. Its subcellular location is the perikaryon. It is found in the cell projection. The protein localises to the axon. It carries out the reaction L-seryl-[protein] + ATP = O-phospho-L-seryl-[protein] + ADP + H(+). The enzyme catalyses L-threonyl-[protein] + ATP = O-phospho-L-threonyl-[protein] + ADP + H(+). Activated by threonine and tyrosine phosphorylation by either of the dual specificity kinases, jkk-1 and mek-1. Serine/threonine-protein kinase which responds to activation by environmental stress by phosphorylating a number of transcription factors such as daf-16, and thus regulates transcriptional activity. By phosphorylating daf-16, plays a role in daf-16 nuclear translocation in intestinal cells in response to environmental stresses such as heat and oxidative stresses. Downstream of jkk-1, may coordinate locomotion via type-D GABAergic motoneurons and regulates synaptic vesicle transport in conjunction with unc-16. Independently of jkk-1, may regulate some mechanosensory responses, such as response to touch. Independently of jkk-1 and downstream of mek-1, plays a role in resistance to heavy metals, such as Cu(2+) or Cd(2+). Regulates germline cell apoptosis in response to heavy metals such as Cu(2+) and arsenite. Required for dopaminergic CEP neuron degeneration in response to Mn(2+). Required for normal sleep bout quantity and arousal thresholds during the transition from the last larval stage to adulthood in well-fed animals. Downstream of jkk-1 but independently of mek-1, positively regulates lifespan. The protein is Stress-activated protein kinase jnk-1 (jnk-1) of Caenorhabditis elegans.